We begin with the raw amino-acid sequence, 347 residues long: NADH-ubiquinone oxidoreductase chain 2 (347 aa).

10 consecutive transmembrane segments (helical) span residues 3 to 23 (PMIF…VMMS), 25 to 45 (HWFM…PVLM), 59 to 79 (YFLT…INLM), 96 to 116 (MLIT…FWVP), 122 to 142 (IPLS…LSLL), 149 to 169 (INME…GWGG), 201 to 221 (SFLN…LLIF), 239 to 259 (IIAT…PLTG), 274 to 294 (NSTI…FFYI), and 326 to 346 (ILPL…FLML).

It belongs to the complex I subunit 2 family. Core subunit of respiratory chain NADH dehydrogenase (Complex I) which is composed of 45 different subunits. Interacts with TMEM242.

It localises to the mitochondrion inner membrane. It carries out the reaction a ubiquinone + NADH + 5 H(+)(in) = a ubiquinol + NAD(+) + 4 H(+)(out). Its function is as follows. Core subunit of the mitochondrial membrane respiratory chain NADH dehydrogenase (Complex I) that is believed to belong to the minimal assembly required for catalysis. Complex I functions in the transfer of electrons from NADH to the respiratory chain. The immediate electron acceptor for the enzyme is believed to be ubiquinone. The sequence is that of NADH-ubiquinone oxidoreductase chain 2 from Crocidura hildegardeae (Hildegarde's shrew).